The sequence spans 236 residues: Ascorbate-specific transmembrane electron transporter 2 (236 aa).

The Cytoplasmic segment spans residues 1–13 (MGLGLGVRAAPFT). Residues 14–34 (YAAHALAVAAAAMVLVWAIYF) traverse the membrane as a helical segment. A Cytochrome b561 domain is found at 15 to 219 (AAHALAVAAA…FGASVVVAAI (205 aa)). At 35–50 (RGGLAIEATNKNLIFN) the chain is on the extracellular side. The helical transmembrane segment at 51-71 (VHPVLMLIGYIIIGGEAIMVY) threads the bilayer. His-52 is a heme b binding site. Residue 67 to 75 (AIMVYRVLP) coordinates L-ascorbate. Topologically, residues 72 to 84 (RVLPTSNHETNKL) are cytoplasmic. The chain crosses the membrane as a helical span at residues 85-105 (IHLVLHGIALVLGAVGIYFAF). Residues His-86 and His-120 each contribute to the heme b site. At 106-122 (KNHNESGIANLYSLHSW) the chain is on the extracellular side. Monodehydro-L-ascorbate radical is bound at residue 116 to 125 (LYSLHSWIGI). A helical membrane pass occupies residues 123-143 (IGIGTITLYGIQWIVGFVTFF). The Cytoplasmic portion of the chain corresponds to 144–153 (FPGAAPNVKK). Residues 154–174 (GVLPWHILFGLFVYILALANA) form a helical membrane-spanning segment. His-159 is a binding site for heme b. The Extracellular segment spans residues 175 to 201 (ELGFLEKLTFLESSGLDKYGTEAFLVN). Residues 202–222 (FTALVVVLFGASVVVAAIAPV) traverse the membrane as a helical segment. Topologically, residues 223–236 (RLEEPQGYVPIPEN) are cytoplasmic.

Heme b is required as a cofactor.

It is found in the membrane. Its function is as follows. Two-heme-containing cytochrome. Catalyzes ascorbate-dependent trans-membrane electron transfer by utilizing a concerted H(+)/e(-) transfer mechanism. The protein is Ascorbate-specific transmembrane electron transporter 2 of Zea mays (Maize).